The chain runs to 84 residues: Large ribosomal subunit protein bL27 (84 aa).

The tract at residues 1-21 (MAHKKGASSTRNGRDSNAQRL) is disordered. The segment covering 7 to 19 (ASSTRNGRDSNAQ) has biased composition (polar residues).

This sequence belongs to the bacterial ribosomal protein bL27 family.

The polypeptide is Large ribosomal subunit protein bL27 (Clavibacter sepedonicus (Clavibacter michiganensis subsp. sepedonicus)).